The sequence spans 418 residues: METHISCLFPELLAMIFGYLDVRDKGRAAQVCTAWRDAAYHKSVWRGVEAKLHLRRANPSLFPSLQARGIRRVQILSLRRSLSYVIQGMANIESLNLSGCYNLTDNGLGHAFVQEIGSLRALNLSLCKQITDSSLGRIAQYLKGLEVLELGGCSNITNTGLLLIAWGLQRLKSLNLRSCRHLSDVGIGHLAGMTRSAAEGCLGLEQLTLQDCQKLTDLSLKHISRGLTGLRLLNLSFCGGISDAGLLHLSHMGSLRSLNLRSCDNISDTGIMHLAMGSLRLSGLDVSFCDKVGDQSLAYIAQGLDGLKSLSLCSCHISDDGINRMVRQMHGLRTLNIGQCVRITDKGLELIAEHLSQLTGIDLYGCTRITKRGLERITQLPCLKVLNLGLWQMTDSEKEARGDFSPLFTVRTRGSSRR.

The F-box domain occupies 2 to 48 (ETHISCLFPELLAMIFGYLDVRDKGRAAQVCTAWRDAAYHKSVWRGV). The tract at residues 2–48 (ETHISCLFPELLAMIFGYLDVRDKGRAAQVCTAWRDAAYHKSVWRGV) is required for down-regulation of SNAI1. LRR repeat units lie at residues 144–163 (GLEV…GLLL), 170–191 (RLKS…GHLA), 203–225 (GLEQ…HISR), 229–250 (GLRL…LHLS), and 254–275 (SLRS…MHLA).

Part of a SCF (SKP1-cullin-F-box) ubiquitin-protein ligase complex. Interacts with SKP1 and CUL1. Interacts with SNAI1; the interaction requires the phosphorylation of the two serine residues in the substrate destruction motif D-S-G-X(2,3,4)-S.

The protein localises to the cytoplasm. Its function is as follows. Substrate-recognition component of some SCF (SKP1-CUL1-F-box protein)-type E3 ubiquitin-protein ligase complexes. The SCF(FBXL14) complex acts by mediating ubiquitination and subsequent degradation of SNAI1. In Homo sapiens (Human), this protein is F-box/LRR-repeat protein 14 (FBXL14).